The primary structure comprises 300 residues: tRNA pseudouridine synthase B (300 aa).

Asp38 serves as the catalytic Nucleophile.

Belongs to the pseudouridine synthase TruB family. Type 1 subfamily.

It carries out the reaction uridine(55) in tRNA = pseudouridine(55) in tRNA. Responsible for synthesis of pseudouridine from uracil-55 in the psi GC loop of transfer RNAs. This is tRNA pseudouridine synthase B from Dehalococcoides mccartyi (strain ATCC BAA-2266 / KCTC 15142 / 195) (Dehalococcoides ethenogenes (strain 195)).